Consider the following 1231-residue polypeptide: RNA-binding protein 33 (1231 aa).

Residues Met1–Ala13 show a composition bias toward gly residues. Disordered stretches follow at residues Met1–Gln168 and Ser219–Glu261. Ala2 is modified (N-acetylalanine). Residues Gln20 to Asp36 show a composition bias toward basic and acidic residues. Over residues Glu37–Gly49 the composition is skewed to acidic residues. The residue at position 41 (Ser41) is a Phosphoserine. Residues Phe82–Asn108 are compositionally biased toward polar residues. Composition is skewed to acidic residues over residues Gly112–Glu124 and Leu153–Gln168. Residues Glu224 to Lys240 show a composition bias toward basic and acidic residues. Residues Glu241–Glu252 are compositionally biased toward acidic residues. 2 positions are modified to phosphoserine: Ser243 and Ser271. Disordered regions lie at residues Phe297–His436 and Pro452–Glu761. Residues Lys305 to Arg316 show a composition bias toward basic residues. Residues Gly327–Pro344 are compositionally biased toward basic and acidic residues. A compositionally biased stretch (pro residues) spans Leu360–Gln379. Residues Gln380 to Gln398 are compositionally biased toward low complexity. Positions Phe469–Val483 are enriched in pro residues. Position 520 is an asymmetric dimethylarginine (Arg520). 4 stretches are compositionally biased toward pro residues: residues Ser531 to Thr540, Phe604 to Pro618, Leu632 to Gln647, and Pro661 to His682. Polar residues-rich tracts occupy residues Gln713 to Pro728 and Ala736 to Leu759. 2 positions are modified to phosphoserine: Ser792 and Ser816. Disordered stretches follow at residues Arg796–Leu840, Glu876–Ala932, and Glu998–Gln1080. Residues Gln820–Ala829 are compositionally biased toward basic and acidic residues. A coiled-coil region spans residues Leu840 to Gln891. Positions Gln880 to Gln901 are enriched in low complexity. Ser1002 and Ser1010 each carry phosphoserine. Lys1019 is covalently cross-linked (Glycyl lysine isopeptide (Lys-Gly) (interchain with G-Cter in SUMO2)). Ser1032 and Ser1051 each carry phosphoserine.

In terms of assembly, associates with the NXF1-NXT1 RNA export complex. Interacts with ALKBH5; facilitating ALKBH5 recruitment to m6A-containing transcripts. Interacts with SENP1; promoting ALKBH5 deSUMOylation and subsequent activation.

The protein localises to the nucleus. It is found in the cytoplasm. In terms of biological role, RNA reader protein, which recognizes and binds specific RNAs, thereby regulating RNA metabolic processes, such as mRNA export, mRNA stability and/or translation. Binds a subset of intronless RNAs containing GC-rich elements, such as NORAD, and promotes their nuclear export by recruiting target RNAs to components of the NXF1-NXT1 RNA export machinery. Specifically recognizes and binds N6-methyladenosine (m6A)-containing mRNAs, promoting their demethylation by ALKBH5. Acts as an molecular adapter, which (1) promotes ALKBH5 recruitment to m6A-containing transcripts and (2) activates ALKBH5 demethylase activity by recruiting SENP1, leading to ALKBH5 deSUMOylation and subsequent activation. The polypeptide is RNA-binding protein 33 (Mus musculus (Mouse)).